The chain runs to 254 residues: Urease accessory protein UreF (254 aa).

The span at 1–11 (MDKGKSVKSTE) shows a compositional bias: basic and acidic residues. The interval 1–25 (MDKGKSVKSTEKSVGIPPKTPKTDN) is disordered.

This sequence belongs to the UreF family. In terms of assembly, ureH, UreF and UreG form a complex that acts as a GTP-hydrolysis-dependent molecular chaperone, activating the urease apoprotein by helping to assemble the nickel containing metallocenter of UreC. The UreE protein probably delivers the nickel.

Its subcellular location is the cytoplasm. Its function is as follows. Required for maturation of urease via the functional incorporation of the urease nickel metallocenter. This chain is Urease accessory protein UreF, found in Helicobacter pylori (strain P12).